The sequence spans 104 residues: Large ribosomal subunit protein uL24 (104 aa).

The protein belongs to the universal ribosomal protein uL24 family. Part of the 50S ribosomal subunit.

In terms of biological role, one of two assembly initiator proteins, it binds directly to the 5'-end of the 23S rRNA, where it nucleates assembly of the 50S subunit. Its function is as follows. One of the proteins that surrounds the polypeptide exit tunnel on the outside of the subunit. This is Large ribosomal subunit protein uL24 from Clostridium botulinum (strain Alaska E43 / Type E3).